A 102-amino-acid polypeptide reads, in one-letter code: uncharacterized protein (102 aa).

This is an uncharacterized protein from Ictaluridae (bullhead catfishes).